The following is a 520-amino-acid chain: Ribonuclease Y (520 aa).

A helical transmembrane segment spans residues 4-24 (TMFTIISILLSLICLVVGYFV). One can recognise a KH domain in the interval 210 to 273 (TVSVVNLPND…ETARIALDKL (64 aa)). The 94-residue stretch at 336 to 429 (VLKHSIEVAH…VAAADALSAA (94 aa)) folds into the HD domain.

This sequence belongs to the RNase Y family.

It localises to the cell membrane. Endoribonuclease that initiates mRNA decay. The polypeptide is Ribonuclease Y (Bacillus pumilus (strain SAFR-032)).